A 367-amino-acid chain; its full sequence is MPRITQEISYNCDYGDNTFNLAIDIGGTLAKVVFSPIHSNRLMFYTIETEKIDKFMELLHSIIKEHNNGCYRMTHIIATGGGAFKFYDLLYENFPQIKGISRFEEMEGLIHGLDFFIHEIPDEVFTYNDQDGERIIPTSSGTMDSKAIYPYLLVNIGSGVSILKVTEPNNFSRVGGSSLGGGTLWGLLSLITGAQTYDQMLDWAQEGDNSSVDMLVGDIYGTDYNKIGLKSSAIASSFGKVFQNRMTSNKSLENNENKLYSSHESIEKNNGQMFKNPDICKSLLFAISNNIGQIAYLQAKINNIQNIYFGGSYTRGHLTTMNTLSYAINFWSQGSKQAFFLKHEGYLGAMGAFLSASRHSSTKKTST.

It belongs to the type II pantothenate kinase family.

Its subcellular location is the cytoplasm. It localises to the nucleus. The catalysed reaction is (R)-pantothenate + ATP = (R)-4'-phosphopantothenate + ADP + H(+). It participates in cofactor biosynthesis; coenzyme A biosynthesis; CoA from (R)-pantothenate: step 1/5. With respect to regulation, regulated by feedback inhibition by malonyl-CoA. In terms of biological role, plays a role in the physiological regulation of the intracellular CoA concentration. In Saccharomyces cerevisiae (strain ATCC 204508 / S288c) (Baker's yeast), this protein is Pantothenate kinase CAB1 (CAB1).